The following is a 244-amino-acid chain: NAD(P)H-hydrate epimerase (244 aa).

The 206-residue stretch at 35 to 240 (IREIDSLAME…SIGVPLELLR (206 aa)) folds into the YjeF N-terminal domain. 82–86 (NNGGD) is a (6S)-NADPHX binding site. K(+)-binding residues include Asn-83 and Asp-150. Residues 154 to 160 (GTGAKPP), Tyr-165, and Asp-183 each bind (6S)-NADPHX. Thr-186 serves as a coordination point for K(+).

It belongs to the NnrE/AIBP family. Requires K(+) as cofactor.

It catalyses the reaction (6R)-NADHX = (6S)-NADHX. The catalysed reaction is (6R)-NADPHX = (6S)-NADPHX. Functionally, catalyzes the epimerization of the S- and R-forms of NAD(P)HX, a damaged form of NAD(P)H that is a result of enzymatic or heat-dependent hydration. This is a prerequisite for the S-specific NAD(P)H-hydrate dehydratase to allow the repair of both epimers of NAD(P)HX. This chain is NAD(P)H-hydrate epimerase, found in Rhodopirellula baltica (strain DSM 10527 / NCIMB 13988 / SH1).